A 243-amino-acid polypeptide reads, in one-letter code: Ubiquinone/menaquinone biosynthesis C-methyltransferase UbiE (243 aa).

Residues Thr69, Asp90, and 116–117 (DA) each bind S-adenosyl-L-methionine.

Belongs to the class I-like SAM-binding methyltransferase superfamily. MenG/UbiE family.

It carries out the reaction a 2-demethylmenaquinol + S-adenosyl-L-methionine = a menaquinol + S-adenosyl-L-homocysteine + H(+). The enzyme catalyses a 2-methoxy-6-(all-trans-polyprenyl)benzene-1,4-diol + S-adenosyl-L-methionine = a 5-methoxy-2-methyl-3-(all-trans-polyprenyl)benzene-1,4-diol + S-adenosyl-L-homocysteine + H(+). It participates in quinol/quinone metabolism; menaquinone biosynthesis; menaquinol from 1,4-dihydroxy-2-naphthoate: step 2/2. It functions in the pathway cofactor biosynthesis; ubiquinone biosynthesis. Its function is as follows. Methyltransferase required for the conversion of demethylmenaquinol (DMKH2) to menaquinol (MKH2) and the conversion of 2-polyprenyl-6-methoxy-1,4-benzoquinol (DDMQH2) to 2-polyprenyl-3-methyl-6-methoxy-1,4-benzoquinol (DMQH2). This Cupriavidus metallidurans (strain ATCC 43123 / DSM 2839 / NBRC 102507 / CH34) (Ralstonia metallidurans) protein is Ubiquinone/menaquinone biosynthesis C-methyltransferase UbiE.